The sequence spans 589 residues: Arginine--tRNA ligase (589 aa).

Residues 131–141 carry the 'HIGH' region motif; sequence ANPTGPLHVGH.

Belongs to the class-I aminoacyl-tRNA synthetase family. Monomer.

It is found in the cytoplasm. The enzyme catalyses tRNA(Arg) + L-arginine + ATP = L-arginyl-tRNA(Arg) + AMP + diphosphate. In Legionella pneumophila (strain Paris), this protein is Arginine--tRNA ligase.